The chain runs to 438 residues: RING finger protein 150 (438 aa).

A signal peptide spans 1–34; it reads MAMSLIQACCSLALSTWLLSFCFVHLLCLDFTVA. At 35-208 the chain is on the extracellular side; it reads EKEEWYTAFV…NLQKYVSRTS (174 aa). Residues Asn45, Asn125, Asn153, and Asn186 are each glycosylated (N-linked (GlcNAc...) asparagine). In terms of domain architecture, PA spans 81–183; sequence SPKQDARGEV…PKGKEIVSLL (103 aa). Residues 209–229 form a helical membrane-spanning segment; the sequence is VVFVSISFIVLMIISLAWLVF. The Cytoplasmic segment spans residues 230–438; it reads YYIQRFRYAN…TDQDCEEVKS (209 aa). The RING-type; atypical zinc-finger motif lies at 278–319; sequence CAVCIEGYKPNDVVRILPCRHLFHKSCVDPWLLDHRTCPMCK.

The protein resides in the membrane. The sequence is that of RING finger protein 150 (RNF150) from Homo sapiens (Human).